Reading from the N-terminus, the 365-residue chain is Putative ankyrin repeat protein R903 (365 aa).

ANK repeat units follow at residues Asn-38–Phe-67, Gln-68–Ile-97, Asn-99–Asn-127, Ser-129–Lys-158, Lys-184–Thr-213, Val-214–Arg-243, Ser-245–Asp-273, Leu-275–Val-298, Asn-299–Glu-328, and Arg-330–Ser-361.

The sequence is that of Putative ankyrin repeat protein R903 from Acanthamoeba polyphaga mimivirus (APMV).